A 337-amino-acid polypeptide reads, in one-letter code: Zinc finger protein 488 (337 aa).

Polar residues predominate over residues 1 to 10; that stretch reads MAAGTSTLLS. 3 disordered regions span residues 1–32, 55–83, and 146–179; these read MAAGTSTLLSLSGPADHMAEGKGAPLRPSVEK, SDTAAGKGSQDEAYTELSLPTAPNKPRLD, and SAWPGAPRSEQKSAFSKPAKRPAEKPKRSPMLLA. The tract at residues 69–184 is important for transcriptional repression activity; sequence TELSLPTAPN…PMLLAGGSAE (116 aa). C2H2-type zinc fingers lie at residues 272–299 and 314–336; these read NWCAKCNLAFRLTADLVFHMRSHHKREH and LTCPVCHEYFRERHHLSRHMASH. Positions 295-302 match the Nuclear localization signal motif; that stretch reads HKREHVGP.

Belongs to the krueppel C2H2-type zinc-finger protein family. Interacts with OLIG2.

It localises to the nucleus. Functionally, transcriptional repressor. Plays a role in oligodendrocyte differentiation, together with OLIG2. Mediates Notch signaling-activated formation of oligodendrocyte precursors. Promotes differentiation of adult neural stem progenitor cells (NSPCs) into mature oligodendrocytes and contributes to remyelination following nerve injury. The protein is Zinc finger protein 488 (Znf488) of Mus musculus (Mouse).